Reading from the N-terminus, the 197-residue chain is Nucleoside triphosphate pyrophosphatase (197 aa).

Asp-72 functions as the Proton acceptor in the catalytic mechanism.

It belongs to the Maf family. A divalent metal cation is required as a cofactor.

The protein resides in the cytoplasm. It carries out the reaction a ribonucleoside 5'-triphosphate + H2O = a ribonucleoside 5'-phosphate + diphosphate + H(+). It catalyses the reaction a 2'-deoxyribonucleoside 5'-triphosphate + H2O = a 2'-deoxyribonucleoside 5'-phosphate + diphosphate + H(+). In terms of biological role, nucleoside triphosphate pyrophosphatase. May have a dual role in cell division arrest and in preventing the incorporation of modified nucleotides into cellular nucleic acids. The sequence is that of Nucleoside triphosphate pyrophosphatase from Corynebacterium efficiens (strain DSM 44549 / YS-314 / AJ 12310 / JCM 11189 / NBRC 100395).